A 222-amino-acid chain; its full sequence is Histidinol-phosphatase (222 aa).

The active-site Nucleophile is Asp-8. Residues Asp-8, Asp-10, and Asp-184 each contribute to the Mg(2+) site. Residue Asp-10 is the Proton donor of the active site.

It belongs to the HAD-like hydrolase superfamily. SerB family. The cofactor is Mg(2+).

The catalysed reaction is L-histidinol phosphate + H2O = L-histidinol + phosphate. The protein operates within amino-acid biosynthesis; L-histidine biosynthesis; L-histidine from 5-phospho-alpha-D-ribose 1-diphosphate: step 8/9. Its function is as follows. Catalyzes the dephosphorylation of histidinol-phosphate to histidinol, the direct precursor of histidine. In Neisseria meningitidis serogroup C (strain 8013), this protein is Histidinol-phosphatase.